We begin with the raw amino-acid sequence, 102 residues long: MRGRRRAWRGAWRGGGAADLSLLCPQVAYVRARELHTLEVTGLETVAQSKAHVASLEGLIPEDKVVLLAGSPLQNEATLGQCGVEALTTLEVVGRRLGVHNV.

In terms of domain architecture, Ubiquitin-like spans 23-99; that stretch reads LCPQVAYVRA…LEVVGRRLGV (77 aa).

The polypeptide is Putative ubiquitin-like protein FUBI-like protein ENSP00000310146 (Homo sapiens (Human)).